Here is a 68-residue protein sequence, read N- to C-terminus: KCNQ1 downstream neighbor protein (68 aa).

The segment at 28–68 is disordered; sequence GVASGCSPSKASQEARGKEKCPTLNGQPQWSALFTLPPQRE.

As to expression, shows reduced expression in Wilms' tumor samples.

The chain is KCNQ1 downstream neighbor protein (KCNQ1DN) from Homo sapiens (Human).